We begin with the raw amino-acid sequence, 68 residues long: MKTHFAIFLITLFLFQMFSQSDAIFKAIWSGIKRLCGKRGLSDLYDLDEMFDGEISQADIDFLKELMR.

A signal peptide spans 1-23 (MKTHFAIFLITLFLFQMFSQSDA). At C36 the chain carries Cysteine amide. Positions 40-68 (GLSDLYDLDEMFDGEISQADIDFLKELMR) are excised as a propeptide.

Belongs to the non-disulfide-bridged peptide (NDBP) superfamily. Short antimicrobial peptide (group 4) family. Expressed by the venom gland.

It localises to the secreted. The protein resides in the target cell membrane. Amphipathic peptide with antimicrobial activity. The protein is Peptide Hp1412 of Heterometrus petersii (Asian forest scorpion).